The sequence spans 172 residues: Adenine phosphoribosyltransferase (172 aa).

Belongs to the purine/pyrimidine phosphoribosyltransferase family. In terms of assembly, homodimer.

It localises to the cytoplasm. It carries out the reaction AMP + diphosphate = 5-phospho-alpha-D-ribose 1-diphosphate + adenine. Its pathway is purine metabolism; AMP biosynthesis via salvage pathway; AMP from adenine: step 1/1. Its function is as follows. Catalyzes a salvage reaction resulting in the formation of AMP, that is energically less costly than de novo synthesis. This Prochlorococcus marinus (strain MIT 9215) protein is Adenine phosphoribosyltransferase.